Consider the following 150-residue polypeptide: Large ribosomal subunit protein bL9 (150 aa).

This sequence belongs to the bacterial ribosomal protein bL9 family.

Functionally, binds to the 23S rRNA. The sequence is that of Large ribosomal subunit protein bL9 from Streptococcus pyogenes serotype M2 (strain MGAS10270).